We begin with the raw amino-acid sequence, 359 residues long: Probable F-box protein At3g61730 (359 aa).

2 stretches are compositionally biased toward basic and acidic residues: residues 1-14 (MKTR…DSRG) and 37-48 (QKNDIQREEDGR). Residues 1-60 (MKTRSSDAEGDSRGKMIAPVGEGNGGRKRKLVQSNEQKNDIQREEDGRAKRRIVQSSDQK) are disordered. Residues 82 to 128 (QSRFSWYEQDIWTYISRFLDGKSLVKLGATNKWFYKIAMEDTVWRFA) form the F-box; degenerate domain.

As to quaternary structure, interacts with SKP1A. As to expression, expressed in flower buds, developing anthers, pollen grains, siliques, rosette leaves and roots. Detected at lower levels in open flowers, stems and cauline leaves. Expressed in young seedling in the hydathodes, shoot apical meristem, root tips and lateral root primordia.

It localises to the nucleus. Its function is as follows. Regulates tapetum degeneration and pollen maturation during anther development. In Arabidopsis thaliana (Mouse-ear cress), this protein is Probable F-box protein At3g61730 (RMF).